The primary structure comprises 145 residues: Chaperonin GroEL (145 aa).

The protein belongs to the chaperonin (HSP60) family. Forms a cylinder of 14 subunits composed of two heptameric rings stacked back-to-back. Interacts with the co-chaperonin GroES.

The protein localises to the cytoplasm. The catalysed reaction is ATP + H2O + a folded polypeptide = ADP + phosphate + an unfolded polypeptide.. In terms of biological role, together with its co-chaperonin GroES, plays an essential role in assisting protein folding. The GroEL-GroES system forms a nano-cage that allows encapsulation of the non-native substrate proteins and provides a physical environment optimized to promote and accelerate protein folding. This chain is Chaperonin GroEL, found in Thermus thermophilus.